The sequence spans 236 residues: V-set and transmembrane domain-containing protein 1 (236 aa).

A signal peptide spans 1 to 16; it reads MTAEFLSLLCLGLCLG. Topologically, residues 17–135 are extracellular; it reads YEDEKKNEKP…APSMKTDTRT (119 aa). The 88-residue stretch at 27–114 folds into the Ig-like V-type domain; that stretch reads PKPSLHAWPS…EWSESSEHLQ (88 aa). N-linked (GlcNAc...) asparagine glycans are attached at residues N44 and N55. A disulfide bridge links C49 with C96. Residues 136 to 156 form a helical membrane-spanning segment; sequence IFVAIFSCISILLLFLSVFII. The Cytoplasmic portion of the chain corresponds to 157-236; it reads YRCSQHSSSS…GSHEYAALKV (80 aa). The disordered stretch occupies residues 166–200; it reads SEESTKRTSHSKLPEQEAAEADLSNMERVSLSTAD. 2 short sequence motifs (ITIM motif) span residues 204-209 and 229-234; these read VTYAEL and HEYAAL. A disordered region spans residues 215-236; it reads SEAASDTTQEPPGSHEYAALKV.

Post-translationally, isoform 2 is N-glycosylated. Expressed on myeloid (neutrophils, eosinophils and monocytes) but not on lymphoid cells.

The protein resides in the membrane. It localises to the secreted. Behaves as a cytokine, promoting IL17A secretion by CD4+ T-cells, and differentiation and activation of IL17 producing helper T-cells (TH17). Its function is as follows. Inhibitory immune receptor involved in the regulation of phagocytes. This Homo sapiens (Human) protein is V-set and transmembrane domain-containing protein 1 (VSTM1).